Consider the following 212-residue polypeptide: Imidazole glycerol phosphate synthase subunit HisH (212 aa).

Positions 3-212 (DVAIIDYGMG…MLANFISWAP (210 aa)) constitute a Glutamine amidotransferase type-1 domain. The Nucleophile role is filled by C82. Residues H192 and E194 contribute to the active site.

In terms of assembly, heterodimer of HisH and HisF.

It localises to the cytoplasm. It carries out the reaction 5-[(5-phospho-1-deoxy-D-ribulos-1-ylimino)methylamino]-1-(5-phospho-beta-D-ribosyl)imidazole-4-carboxamide + L-glutamine = D-erythro-1-(imidazol-4-yl)glycerol 3-phosphate + 5-amino-1-(5-phospho-beta-D-ribosyl)imidazole-4-carboxamide + L-glutamate + H(+). It catalyses the reaction L-glutamine + H2O = L-glutamate + NH4(+). It participates in amino-acid biosynthesis; L-histidine biosynthesis; L-histidine from 5-phospho-alpha-D-ribose 1-diphosphate: step 5/9. In terms of biological role, IGPS catalyzes the conversion of PRFAR and glutamine to IGP, AICAR and glutamate. The HisH subunit catalyzes the hydrolysis of glutamine to glutamate and ammonia as part of the synthesis of IGP and AICAR. The resulting ammonia molecule is channeled to the active site of HisF. In Aromatoleum aromaticum (strain DSM 19018 / LMG 30748 / EbN1) (Azoarcus sp. (strain EbN1)), this protein is Imidazole glycerol phosphate synthase subunit HisH.